The following is a 426-amino-acid chain: Serine--tRNA ligase (426 aa).

Residue 233–235 (TSE) participates in L-serine binding. 264-266 (RAE) provides a ligand contact to ATP. Glu287 is a binding site for L-serine. 351-354 (EISS) contacts ATP. Ser387 serves as a coordination point for L-serine.

Belongs to the class-II aminoacyl-tRNA synthetase family. Type-1 seryl-tRNA synthetase subfamily. In terms of assembly, homodimer. The tRNA molecule binds across the dimer.

It is found in the cytoplasm. It catalyses the reaction tRNA(Ser) + L-serine + ATP = L-seryl-tRNA(Ser) + AMP + diphosphate + H(+). The enzyme catalyses tRNA(Sec) + L-serine + ATP = L-seryl-tRNA(Sec) + AMP + diphosphate + H(+). It functions in the pathway aminoacyl-tRNA biosynthesis; selenocysteinyl-tRNA(Sec) biosynthesis; L-seryl-tRNA(Sec) from L-serine and tRNA(Sec): step 1/1. Its function is as follows. Catalyzes the attachment of serine to tRNA(Ser). Is also able to aminoacylate tRNA(Sec) with serine, to form the misacylated tRNA L-seryl-tRNA(Sec), which will be further converted into selenocysteinyl-tRNA(Sec). The polypeptide is Serine--tRNA ligase (Stenotrophomonas maltophilia (strain K279a)).